The following is a 315-amino-acid chain: T cell receptor beta chain MC.7.G5 (315 aa).

An N-terminal signal peptide occupies residues Met-1–Ala-21. One can recognise an Ig-like V-type domain in the interval Asp-22 to Glu-114. The interval Asp-22 to Glu-114 is t cell receptor beta variable 25-1. Cys-42 and Cys-110 form a disulfide bridge. The CDR1 stretch occupies residues Met-46–Lys-50. The interval Ser-68–Ser-73 is CDR2. Asn-72 carries N-linked (GlcNAc...) asparagine glycosylation. Positions Cys-110–Phe-127 are CDR3. Residues Thr-122–Leu-136 are t cell receptor beta joining 2-3. The t cell receptor beta constant 2 stretch occupies residues Asp-138–Gly-315. The 110-residue stretch at Pro-145–Thr-254 folds into the Ig-like C1-type domain. Cys-167 and Cys-232 form a disulfide bridge. Asn-206 carries an N-linked (GlcNAc...) asparagine glycan. A connecting peptide region spans residues Cys-267–Ala-281. A helical membrane pass occupies residues Thr-282–Leu-304. Residues Met-305–Gly-315 are Cytoplasmic-facing.

Disulfide-linked heterodimer with TRAV38-2DV8*01J31*01C*01 alpha chain. The alpha-beta TR associates with the transmembrane signaling CD3 coreceptor proteins to form the TR-CD3 (TCR). The assembly of alpha-beta TR heterodimers with CD3 occurs in the endoplasmic reticulum where a single alpha-beta TR heterodimer associates with one CD3D-CD3E heterodimer, one CD3G-CD3E heterodimer and one CD247 homodimer forming a stable octameric structure. CD3D-CD3E and CD3G-CD3E heterodimers preferentially associate with TR alpha and TR beta chains (via TM domain), respectively. The association of the CD247 homodimer is the last step of TCR assembly in the endoplasmic reticulum and is required for transport to the cell surface. Expressed in MR1-restricted CD8-positive T cells.

Its subcellular location is the cell membrane. In terms of biological role, the beta chain of TRAV38-2DV8*01J31*01C*01/TRBV25-1*01J2S3*01C2*01 alpha-beta T cell receptor (TR) clonotype that displays pan-cancer cell recognition via the invariant MR1 molecule. On CD8-positive T cell clone MC.7.G5, likely recognizes tumor-specific or -associated metabolite(s) essential for cancer cell survival, triggering killing of many cancer cell types including lung, melanoma, leukemia, colon, breast, prostate, bone and ovarian cancer cells. Mediates cancer cell cytotoxicity in an HLA-independent manner. Has no reactivity to healthy cells even stressed or infected by bacteria. Antigen recognition initiates TR-CD3 clustering on the cell surface and intracellular activation of LCK that phosphorylates the ITAM motifs of CD3G, CD3D, CD3E and CD247 enabling the recruitment of ZAP70. In turn, ZAP70 phosphorylates LAT, which recruits numerous signaling molecules to form the LAT signalosome. The LAT signalosome propagates signal branching to three major signaling pathways, the calcium, the mitogen-activated protein kinase (MAPK) kinase and the nuclear factor NF-kappa-B (NF-kB) pathways, leading to the mobilization of transcription factors that are critical for gene expression and essential for T cell differentiation into effector/memory T cells. The chain is T cell receptor beta chain MC.7.G5 from Homo sapiens (Human).